The chain runs to 146 residues: VHWSAEEKQLITGLWGKVNVADCGAEALARLLIVYPWTQRFFSSFGNLSSPTAILGNPMVRAHGKKVLTSFGDAVKNLDNIKNTFAQLSELHCDKLHVDPENFRLLGDILIIVLAAHFAKEFTPDCQAAWQKLVRVVAHALARKYH.

One can recognise a Globin domain in the interval histidine 2–histidine 146. The heme b site is built by histidine 63 and histidine 92.

This sequence belongs to the globin family. As to quaternary structure, heterotetramer of two alpha chains and two beta chains. In terms of tissue distribution, red blood cells.

In terms of biological role, involved in oxygen transport from the lung to the various peripheral tissues. In Anser indicus (Bar-headed goose), this protein is Hemoglobin subunit beta (HBB).